Reading from the N-terminus, the 384-residue chain is UDP-N-acetylglucosamine--N-acetylmuramyl-(pentapeptide) pyrophosphoryl-undecaprenol N-acetylglucosamine transferase (384 aa).

UDP-N-acetyl-alpha-D-glucosamine contacts are provided by residues 17–19 (TGG), asparagine 131, arginine 172, serine 200, and glutamine 301.

Belongs to the glycosyltransferase 28 family. MurG subfamily.

The protein localises to the cell inner membrane. It catalyses the reaction di-trans,octa-cis-undecaprenyl diphospho-N-acetyl-alpha-D-muramoyl-L-alanyl-D-glutamyl-meso-2,6-diaminopimeloyl-D-alanyl-D-alanine + UDP-N-acetyl-alpha-D-glucosamine = di-trans,octa-cis-undecaprenyl diphospho-[N-acetyl-alpha-D-glucosaminyl-(1-&gt;4)]-N-acetyl-alpha-D-muramoyl-L-alanyl-D-glutamyl-meso-2,6-diaminopimeloyl-D-alanyl-D-alanine + UDP + H(+). It functions in the pathway cell wall biogenesis; peptidoglycan biosynthesis. In terms of biological role, cell wall formation. Catalyzes the transfer of a GlcNAc subunit on undecaprenyl-pyrophosphoryl-MurNAc-pentapeptide (lipid intermediate I) to form undecaprenyl-pyrophosphoryl-MurNAc-(pentapeptide)GlcNAc (lipid intermediate II). The chain is UDP-N-acetylglucosamine--N-acetylmuramyl-(pentapeptide) pyrophosphoryl-undecaprenol N-acetylglucosamine transferase from Granulibacter bethesdensis (strain ATCC BAA-1260 / CGDNIH1).